The chain runs to 262 residues: Inner membrane protein YcfZ (262 aa).

The Cytoplasmic segment spans residues 1–4 (MKKF). Residues 5–27 (IILLSLLILLPLTAASKPLIPIM) form a helical membrane-spanning segment. The Periplasmic segment spans residues 28 to 182 (KTLFTDVTGT…HENAPPGSTN (155 aa)). The chain crosses the membrane as a helical span at residues 183–202 (TLGFIAWAATFILFSRIFYY). Residues 203–206 (TTRF) are Cytoplasmic-facing. A helical membrane pass occupies residues 207 to 229 (IYALKFAVAMTIANMGYQALCLY). Residues 230–238 (IDNSFAITR) are Periplasmic-facing. Residues 239 to 258 (ISPLWAGLIGVCTFIAALLL) form a helical membrane-spanning segment. Over 259–262 (TSKR) the chain is Cytoplasmic.

The protein resides in the cell inner membrane. The chain is Inner membrane protein YcfZ (ycfZ) from Escherichia coli (strain K12).